We begin with the raw amino-acid sequence, 477 residues long: MLGARRLLGALRLCSSVSCPRPRASAKMRVRDALRVQDARGECVTVQGWIRSVRSQKEVLFLHVNDGSSLESLQIVADSSFDSRELTFGSSVQVQGQLVKSQSKRQNVELKAEKIEVIGDCEAKAFPIKYKERHPLEYLRQYPHLRCRTNALGSILRVRSEATAAIHSYFKDNGFVHIHTPVLTSNDCEGAGELFQVEPSSKIKGPKESFFDVPAFLTVSGQLHLEVMSGAFTQVFTFGPTFRAENSQSRRHLAEFYMVEAEISFVESLQDLMQVMEELFKATTEMVLSHCPEDVELCHQFIAAGQKGRLEHMLKNNFLIISYTEAIEILKQASQNFAFTPKWGVDLQTEHEKYLVRHCGNIPVFVINYPSELKPFYMRENEDGPQNTVAAVDLLVPGVGELFGGSLREERYHVLEQRLARSGLTKAYQWYLDLRKFGSVPHGGFGMGFERYLQCILGVDNIKDVIPFPRFTHSCLL.

Residues 1-14 (MLGARRLLGALRLC) constitute a mitochondrion transit peptide. N6-acetyllysine is present on K353.

It belongs to the class-II aminoacyl-tRNA synthetase family. Homodimer. As to expression, expressed in brain and inner ear, including the cochlear epithelium and organ of Corti.

The protein localises to the mitochondrion matrix. It is found in the mitochondrion. It carries out the reaction tRNA(Asn) + L-asparagine + ATP = L-asparaginyl-tRNA(Asn) + AMP + diphosphate + H(+). Functionally, mitochondrial aminoacyl-tRNA synthetase that catalyzes the specific attachment of the asparagine amino acid (aa) to the homologous transfer RNA (tRNA), further participating in protein synthesis. The reaction occurs in a two steps: asparagine is first activated by ATP to form Asn-AMP and then transferred to the acceptor end of tRNA(Asn). The protein is Asparaginyl-tRNA synthetase of Mus musculus (Mouse).